We begin with the raw amino-acid sequence, 429 residues long: Cell wall protein ECM33 (429 aa).

A signal peptide spans methionine 1–alanine 19. Asparagine 21, asparagine 56, asparagine 82, asparagine 196, asparagine 209, asparagine 227, asparagine 234, asparagine 241, asparagine 267, asparagine 279, asparagine 304, and asparagine 328 each carry an N-linked (GlcNAc...) asparagine glycan. Serine 339 carries the phosphoserine modification. Residues leucine 361–serine 401 are compositionally biased toward low complexity. The interval leucine 361–glutamate 410 is disordered. Residue glycine 406 is the site of GPI-anchor amidated glycine attachment. The propeptide at alanine 407–leucine 429 is removed in mature form.

This sequence belongs to the SPS2 family. The GPI-anchor is attached to the protein in the endoplasmic reticulum and serves to target the protein to the cell surface. There, the glucosamine-inositol phospholipid moiety is cleaved off and the GPI-modified mannoprotein is covalently attached via its lipidless GPI glycan remnant to the 1,6-beta-glucan of the outer cell wall layer.

Its subcellular location is the cell membrane. The protein resides in the secreted. It is found in the cell wall. Its function is as follows. Required for proper cell wall integrity and for the correct assembly of the mannoprotein outer layer of the cell wall. Important for apical bud growth. The protein is Cell wall protein ECM33 (ECM33) of Saccharomyces cerevisiae (strain YJM789) (Baker's yeast).